A 639-amino-acid chain; its full sequence is Transcription factor phomR' (639 aa).

Positions 14 to 41 form a DNA-binding region, zn(2)-C6 fungal-type; the sequence is CWTCRLRRKKCNEGGPPCDNCEARGIHC. Disordered regions lie at residues 58 to 136 and 476 to 499; these read REEA…AGTG and LPRSPEKTSSASGKPSHGRKTGPE. Low complexity predominate over residues 68–108; the sequence is SGRGRSYSRSSSTAAAAAPKPAEGAMVTGGSSSSSRGSGSS.

Its subcellular location is the nucleus. In terms of biological role, transcription factor; part of the gene cluster that mediates the biosynthesis of the phomopsins, a group of hexapeptide mycotoxins which infects lupins and causes lupinosis disease in livestock. May play a role in the regulation of the production of phomopsins. This is Transcription factor phomR' from Diaporthe leptostromiformis (Lupinosis disease fungus).